The sequence spans 283 residues: Protease HtpX (283 aa).

A run of 2 helical transmembrane segments spans residues 4–24 (ILLF…ILSV) and 33–53 (GGIL…SLFL). Residue histidine 139 coordinates Zn(2+). Glutamate 140 is a catalytic residue. Histidine 143 is a binding site for Zn(2+). The next 2 helical transmembrane spans lie at 147–167 (GDMV…IFLS) and 190–210 (IYFL…SIIA). Zn(2+) is bound at residue glutamate 218.

It belongs to the peptidase M48B family. Requires Zn(2+) as cofactor.

It is found in the cell inner membrane. This Haemophilus influenzae (strain PittEE) protein is Protease HtpX.